The following is a 78-amino-acid chain: Large ribosomal subunit protein bL28 (78 aa).

Residues 1-20 (MSRVCQVTGKRPVTGNNRSH) are disordered.

Belongs to the bacterial ribosomal protein bL28 family.

This Vibrio atlanticus (strain LGP32) (Vibrio splendidus (strain Mel32)) protein is Large ribosomal subunit protein bL28.